The sequence spans 286 residues: ATP synthase gamma chain (286 aa).

The protein belongs to the ATPase gamma chain family. As to quaternary structure, F-type ATPases have 2 components, CF(1) - the catalytic core - and CF(0) - the membrane proton channel. CF(1) has five subunits: alpha(3), beta(3), gamma(1), delta(1), epsilon(1). CF(0) has three main subunits: a, b and c.

It localises to the cell inner membrane. In terms of biological role, produces ATP from ADP in the presence of a proton gradient across the membrane. The gamma chain is believed to be important in regulating ATPase activity and the flow of protons through the CF(0) complex. This is ATP synthase gamma chain from Shewanella frigidimarina (strain NCIMB 400).